The following is a 488-amino-acid chain: Glutamyl-tRNA(Gln) amidotransferase subunit A, mitochondrial (488 aa).

Catalysis depends on charge relay system residues Lys62 and Ser140. The Acyl-ester intermediate role is filled by Ser164. Residues 205 to 228 are disordered; sequence GHDDNDPTSITPQTRERIQDRLSR. A compositionally biased stretch (basic and acidic residues) spans 218 to 227; it reads TRERIQDRLS.

The protein belongs to the amidase family. GatA subfamily. As to quaternary structure, subunit of the heterotrimeric GatCAB amidotransferase (AdT) complex, composed of A, B and C subunits.

The protein localises to the mitochondrion. The catalysed reaction is L-glutamyl-tRNA(Gln) + L-glutamine + ATP + H2O = L-glutaminyl-tRNA(Gln) + L-glutamate + ADP + phosphate + H(+). In terms of biological role, allows the formation of correctly charged Gln-tRNA(Gln) through the transamidation of misacylated Glu-tRNA(Gln) in the mitochondria. The reaction takes place in the presence of glutamine and ATP through an activated gamma-phospho-Glu-tRNA(Gln). The protein is Glutamyl-tRNA(Gln) amidotransferase subunit A, mitochondrial of Tuber melanosporum (strain Mel28) (Perigord black truffle).